The primary structure comprises 238 residues: SPEG neighbor protein (238 aa).

One can recognise an IQ domain in the interval 29–55; that stretch reads QSAAIRIQASYRGHRSRKELREKGPPR. 2 consecutive Ig-like domains span residues 54 to 143 and 147 to 236; these read PRVL…ARIL and PTKI…ARVD.

In Homo sapiens (Human), this protein is SPEG neighbor protein.